Reading from the N-terminus, the 432-residue chain is Ornithine decarboxylase 1A, chloroplastic (432 aa).

The residue at position 95 (K95) is an N6-(pyridoxal phosphate)lysine. Residues S227, G265, and 298-301 (EPGR) each bind pyridoxal 5'-phosphate. 341–342 (YD) contacts substrate. The Proton donor; shared with dimeric partner role is filled by C377. D378 contributes to the substrate binding site. Y406 lines the pyridoxal 5'-phosphate pocket.

The protein belongs to the Orn/Lys/Arg decarboxylase class-II family. Homodimer. Only the dimer is catalytically active, as the active sites are constructed of residues from both monomers. Pyridoxal 5'-phosphate is required as a cofactor.

It localises to the plastid. Its subcellular location is the chloroplast. The catalysed reaction is L-ornithine + H(+) = putrescine + CO2. The protein operates within alkaloid biosynthesis; nicotine biosynthesis. It functions in the pathway amine and polyamine biosynthesis; putrescine biosynthesis via L-ornithine pathway; putrescine from L-ornithine: step 1/1. Involved in the biosynthesis of pyridine alkaloid natural products, leading mainly to the production of anabasine, anatabine, nicotine and nornicotine, effective deterrents against herbivores with antiparasitic and pesticide properties (neurotoxins); nornicotine serves as the precursor in the synthesis of the carcinogen compound N'-nitrosonornicotine (NNN). Catalyzes the first and rate-limiting step of polyamine biosynthesis that converts ornithine into putrescine, which is the precursor for the polyamines, spermidine and spermine. Polyamines are essential for cell proliferation and are implicated in cellular processes, ranging from DNA replication to apoptosis. This chain is Ornithine decarboxylase 1A, chloroplastic, found in Nicotiana tabacum (Common tobacco).